Consider the following 196-residue polypeptide: Pycsar effector protein GmPycTM (196 aa).

The next 3 membrane-spanning stretches (helical) occupy residues 34–54 (ISFS…SGII), 82–102 (ITTI…TYLF), and 176–196 (VNWL…FLFL).

It localises to the cell inner membrane. Pycsar (pyrimidine cyclase system for antiphage resistance) provides immunity against bacteriophage. The pyrimidine cyclase (PycC) synthesizes cyclic nucleotides in response to infection; these serve as specific second messenger signals. The signals activate the adjacent effector, leading to bacterial cell death and abortive phage infection. A clade C Pycsar system. Its function is as follows. The effector gene of a two-gene Pycsar system. Expression of this and adjacent uridylate cyclase GmPycC (AC P0DV42) probably confers resistance to bacteriophage. The genes are probably only expressed in response to bacteriophage infection. Probably only responds to cUMP (produced by its cognate NTP cyclase), acts by impairing membrane integrity. The polypeptide is Pycsar effector protein GmPycTM (Gulbenkiania mobilis).